The chain runs to 784 residues: LPS-assembly protein LptD (784 aa).

The first 24 residues, Met-1–Ala-24, serve as a signal peptide directing secretion. 2 disulfide bridges follow: Cys-31/Cys-724 and Cys-173/Cys-725.

It belongs to the LptD family. Component of the lipopolysaccharide transport and assembly complex. Interacts with LptE and LptA. In terms of processing, contains two intramolecular disulfide bonds.

Its subcellular location is the cell outer membrane. Functionally, together with LptE, is involved in the assembly of lipopolysaccharide (LPS) at the surface of the outer membrane. This is LPS-assembly protein LptD from Escherichia coli O1:K1 / APEC.